Consider the following 224-residue polypeptide: LexA repressor (224 aa).

Residues 41-61 constitute a DNA-binding region (H-T-H motif); it reads MREIGDAVGLSSLSSVTHQLN. Active-site for autocatalytic cleavage activity residues include Ser-148 and Lys-185.

It belongs to the peptidase S24 family. Homodimer.

It carries out the reaction Hydrolysis of Ala-|-Gly bond in repressor LexA.. Functionally, represses a number of genes involved in the response to DNA damage (SOS response), including recA and lexA. In the presence of single-stranded DNA, RecA interacts with LexA causing an autocatalytic cleavage which disrupts the DNA-binding part of LexA, leading to derepression of the SOS regulon and eventually DNA repair. This is LexA repressor from Leifsonia xyli subsp. xyli (strain CTCB07).